The primary structure comprises 339 residues: Heme A synthase (339 aa).

A run of 8 helical transmembrane segments spans residues 7 to 27 (VIIW…VGGI), 92 to 112 (HRFI…YFLI), 126 to 146 (ILLG…KSGL), 159 to 179 (LHLT…LDLI), 199 to 219 (AIII…AGLI), 254 to 274 (VQFV…FLTF), 291 to 311 (ALLI…LYSV), and 312 to 332 (PLWL…TTTY). His258 provides a ligand contact to heme. Residue His319 participates in heme binding.

Belongs to the COX15/CtaA family. Type 2 subfamily. In terms of assembly, interacts with CtaB. Requires heme b as cofactor.

Its subcellular location is the cell membrane. The catalysed reaction is Fe(II)-heme o + 2 A + H2O = Fe(II)-heme a + 2 AH2. It participates in porphyrin-containing compound metabolism; heme A biosynthesis; heme A from heme O: step 1/1. Its function is as follows. Catalyzes the conversion of heme O to heme A by two successive hydroxylations of the methyl group at C8. The first hydroxylation forms heme I, the second hydroxylation results in an unstable dihydroxymethyl group, which spontaneously dehydrates, resulting in the formyl group of heme A. The chain is Heme A synthase from Flavobacterium psychrophilum (strain ATCC 49511 / DSM 21280 / CIP 103535 / JIP02/86).